The primary structure comprises 73 residues: Large ribosomal subunit protein bL27c (73 aa).

Belongs to the bacterial ribosomal protein bL27 family.

The protein resides in the plastid. It is found in the chloroplast. In Chrysochromulina alifera (Plankton alga), this protein is Large ribosomal subunit protein bL27c (rpl27).